A 349-amino-acid chain; its full sequence is Flavonol synthase/flavanone 3-hydroxylase (349 aa).

Positions 213-310 (DIVYMLKINY…RMSWPVFLEP (98 aa)) constitute a Fe2OG dioxygenase domain. Fe cation-binding residues include H238, D240, and H291.

The protein belongs to the iron/ascorbate-dependent oxidoreductase family. Requires Fe cation as cofactor. It depends on L-ascorbate as a cofactor.

Its subcellular location is the cytoplasm. It carries out the reaction a (2R,3R)-dihydroflavonol + 2-oxoglutarate + O2 = a flavonol + succinate + CO2 + H2O. It catalyses the reaction a (2S)-flavan-4-one + 2-oxoglutarate + O2 = a (2R,3R)-dihydroflavonol + succinate + CO2. It functions in the pathway secondary metabolite biosynthesis; flavonoid biosynthesis. Catalyzes the formation of flavonols from dihydroflavonols. It can act on dihydrokaempferol to produce kaempferol, on dihydroquercetin to produce quercitin and on dihydromyricetin to produce myricetin. The polypeptide is Flavonol synthase/flavanone 3-hydroxylase (Solanum tuberosum (Potato)).